The sequence spans 635 residues: Probable retaining alpha-galactosidase (635 aa).

Residues 1–30 form the signal peptide; it reads MARSVRRTTLALLLSAVLAMTLFVTAPAHA. Ca(2+) is bound at residue Asp-179. Asp-397 serves as the catalytic Nucleophile. Ca(2+)-binding residues include Glu-446 and Glu-452. The active-site Proton donor/acceptor is the Glu-452.

Belongs to the glycosyl hydrolase 97 family. Ca(2+) is required as a cofactor.

The enzyme catalyses Hydrolysis of terminal, non-reducing alpha-D-galactose residues in alpha-D-galactosides, including galactose oligosaccharides, galactomannans and galactolipids.. This is Probable retaining alpha-galactosidase from Streptomyces bingchenggensis (strain BCW-1).